The primary structure comprises 354 residues: Uroporphyrinogen decarboxylase (354 aa).

Residues 27-31 (RQAGR), Asp-77, Tyr-154, Thr-209, and His-327 contribute to the substrate site.

Belongs to the uroporphyrinogen decarboxylase family. As to quaternary structure, homodimer.

The protein resides in the cytoplasm. It catalyses the reaction uroporphyrinogen III + 4 H(+) = coproporphyrinogen III + 4 CO2. Its pathway is porphyrin-containing compound metabolism; protoporphyrin-IX biosynthesis; coproporphyrinogen-III from 5-aminolevulinate: step 4/4. In terms of biological role, catalyzes the decarboxylation of four acetate groups of uroporphyrinogen-III to yield coproporphyrinogen-III. In Shigella flexneri serotype 5b (strain 8401), this protein is Uroporphyrinogen decarboxylase.